A 346-amino-acid polypeptide reads, in one-letter code: MAACATHSSLMLAYAAASTRSQDLTPTPSLFSFASSRPNHLSFPLLLLGGSRDRRCAAIDRASNHKFIVSAVAAEADLDTEEDLEQTATAVLDPPKPKKGKAALVLKRDRTRSKRFLEIQKLRETKKEYDVNTAISLLKQTANTRFVESVEAHFRLNIDPKYNDQQLRATVSLPKGTGQTVIVAVLAQGEKVDEAKSAGADIVGSDDLIEQIKGGFMEFDKLIASPDMMVKVAGLGKILGPRGLMPNPKAGTVTANIPQAIEEFKKGKVEFRADKTGIVHIPFGKVNFTEEDLLINFLAAVKSVETNKPKGAKGVYWKSAHICSSMGPSIKLNIREMIDFKPPTAN.

A chloroplast-targeting transit peptide spans 1–70 (MAACATHSSL…RASNHKFIVS (70 aa)). Tyr-129 is subject to Phosphotyrosine. At Thr-177 the chain carries Phosphothreonine. Position 197 is a phosphoserine (Ser-197).

This sequence belongs to the universal ribosomal protein uL1 family. In terms of assembly, part of the 50S ribosomal subunit.

It localises to the plastid. It is found in the chloroplast. Functionally, this protein binds directly to 23S ribosomal RNA. The chain is Large ribosomal subunit protein uL1c (RPL1) from Arabidopsis thaliana (Mouse-ear cress).